Reading from the N-terminus, the 350-residue chain is MLHPATQQSPFMVDLHDQVHQGPVPLSYTVTTVTTQGFPLPASQHIPGCSAQQLPACSVMFSGQHYPLCCLPPPLIQACTMQQLPVPYHTYPHLISSDHYILHPPPPAPPPQPTHMAPLGQFVSLQTQHPRMPLQRLDNEMDLRGDQHPLGSFTYSTSATGPTLSPSVPLHYLPHDPLHQELSFGVPYSHMMPRRLSTQRYRLQQPLPPPPPPPPPSYYPSFLPYFLSMLPMSPTTVGPTISLDLDVDDVEMENYEALLNLAERLGDAKPRGLTKADIEQLPSYRFNPDSHQSEQTLCVVCFSDFEVRQLLRVLPCNHEFHAKCVDKWLKANRTCPICRADASEVPREAE.

Residues Cys-298–Arg-339 form an RING-type; atypical zinc finger.

This chain is RING finger protein 44 (Rnf44), found in Rattus norvegicus (Rat).